A 204-amino-acid polypeptide reads, in one-letter code: Large ribosomal subunit protein eL15 (204 aa).

Residue G2 is the site of N-myristoyl glycine attachment. At S34 the chain carries Phosphoserine. Residue K83 forms a Glycyl lysine isopeptide (Lys-Gly) (interchain with G-Cter in SUMO2) linkage. Phosphoserine is present on residues S97 and S100. The interval 165 to 186 is disordered; it reads TSAGRKSRGLGKGHKFHHTIGG. Residues 169-182 show a composition bias toward basic residues; it reads RKSRGLGKGHKFHH.

The protein belongs to the eukaryotic ribosomal protein eL15 family. As to quaternary structure, component of the large ribosomal subunit. Interacts with IFIT1 (via TPR repeats 1-4).

It is found in the cytoplasm. In terms of biological role, component of the large ribosomal subunit. The ribosome is a large ribonucleoprotein complex responsible for the synthesis of proteins in the cell. This chain is Large ribosomal subunit protein eL15 (RPL15), found in Bos taurus (Bovine).